A 120-amino-acid chain; its full sequence is Ribosome-binding factor A (120 aa).

It belongs to the RbfA family. In terms of assembly, monomer. Binds 30S ribosomal subunits, but not 50S ribosomal subunits or 70S ribosomes.

It localises to the cytoplasm. Functionally, one of several proteins that assist in the late maturation steps of the functional core of the 30S ribosomal subunit. Associates with free 30S ribosomal subunits (but not with 30S subunits that are part of 70S ribosomes or polysomes). Required for efficient processing of 16S rRNA. May interact with the 5'-terminal helix region of 16S rRNA. This chain is Ribosome-binding factor A, found in Borrelia garinii subsp. bavariensis (strain ATCC BAA-2496 / DSM 23469 / PBi) (Borreliella bavariensis).